The following is an 860-amino-acid chain: Elastin (860 aa).

The first 27 residues, 1 to 27 (MAGLTAVVPQPGVLLILLLNLLHPAQP), serve as a signal peptide directing secretion. 4-hydroxyproline occurs at positions 35 and 72. P84 bears the Hydroxyproline mark. 4-hydroxyproline is present on P105. 2 positions are modified to allysine: K123 and K127. A 4-hydroxyproline mark is found at P217, P230, P233, and P253. Allysine is present on residues K299, K318, and K321. P346 is modified (4-hydroxyproline). Allysine occurs at positions 368 and 371. Residue P383 is modified to Hydroxyproline. Residues P399 and P405 each carry the 4-hydroxyproline modification. A hydroxyproline mark is found at P410 and P415. Allysine occurs at positions 431, 435, 438, 481, and 484. P498 and P519 each carry 4-hydroxyproline. Allysine occurs at positions 534, 595, 599, and 603. Residues P617, P626, P644, P653, and P661 each carry the 4-hydroxyproline modification. Allysine occurs at positions 668 and 671. The residue at position 702 (P702) is a 4-hydroxyproline. Allysine occurs at positions 719, 723, 783, and 786. P832 carries the post-translational modification 4-hydroxyproline. Residues C850 and C855 are joined by a disulfide bond.

It belongs to the elastin family. As to quaternary structure, the polymeric elastin chains are cross-linked together into an extensible 3D network. Forms a ternary complex with BGN and MFAP2. Interacts with MFAP2 via divalent cations (calcium &gt; magnesium &gt; manganese) in a dose-dependent and saturating manner. Interacts with FBLN5 and FBN1. Forms a ternary complex with FBN1 and FBLN2 or FBLN5. Interacts with MFAP4 in a Ca (2+)-dependent manner; this interaction promotes ELN self-assembly. Interacts with EFEMP2 with moderate affinity. Post-translationally, elastin is formed through the cross-linking of its soluble precursor tropoelastin. Cross-linking is initiated through the action of lysyl oxidase on exposed lysines to form allysine. Subsequent spontaneous condensation reactions with other allysine or unmodified lysine residues result in various bi-, tri-, and tetrafunctional cross-links. The most abundant cross-links in mature elastin fibers are lysinonorleucine, allysine aldol, desmosine, and isodesmosine. In terms of processing, hydroxylation on proline residues within the sequence motif, GXPG, is most likely to be 4-hydroxy as this fits the requirement for 4-hydroxylation in vertebrates.

The protein resides in the secreted. It localises to the extracellular space. Its subcellular location is the extracellular matrix. Functionally, major structural protein of tissues such as aorta and nuchal ligament, which must expand rapidly and recover completely. Molecular determinant of the late arterial morphogenesis, stabilizing arterial structure by regulating proliferation and organization of vascular smooth muscle. The polypeptide is Elastin (Eln) (Mus musculus (Mouse)).